The following is a 120-amino-acid chain: U13-lycotoxin-Ls1e (120 aa).

Residues 1–16 (MKILFVLISILYAVYC) form the signal peptide. A propeptide spanning residues 17–54 (FSSEEDVDSAYLANELEPVEDINSEQYAALEPKEEQER) is cleaved from the precursor. Cystine bridges form between Cys56/Cys70, Cys63/Cys76, Cys69/Cys87, and Cys78/Cys85. The Agouti domain occupies 56–95 (CAGMGRDCKDDCDCCLNIATCNCWFGRYFCSCTFGDYQTC).

This sequence belongs to the neurotoxin 05 (agouti) family. Contains 6 disulfide bonds. Expressed by the venom gland.

The protein resides in the secreted. This chain is U13-lycotoxin-Ls1e, found in Lycosa singoriensis (Wolf spider).